The following is an 862-amino-acid chain: C-type lectin domain-containing protein 161 (862 aa).

The N-terminal stretch at Met-1–Ala-20 is a signal peptide. 2 N-linked (GlcNAc...) asparagine glycosylation sites follow: Asn-22 and Asn-91. Residues Ser-41–Thr-154 form the C-type lectin 1 domain. Residues Cys-62 and Cys-153 are joined by a disulfide bond. The tract at residues Ala-162 to Asp-291 is disordered. Over residues Ser-198–Glu-218 the composition is skewed to basic and acidic residues. Asn-222 carries an N-linked (GlcNAc...) asparagine glycan. A compositionally biased stretch (basic and acidic residues) spans Ser-242 to Glu-252. Residues Asn-258, Asn-279, and Asn-352 are each glycosylated (N-linked (GlcNAc...) asparagine). Residues Ala-265–Asp-283 show a composition bias toward low complexity. Disordered stretches follow at residues Met-377–Leu-437, Ala-450–Ala-469, and Ala-474–Ser-504. A compositionally biased stretch (low complexity) spans Ser-388–Lys-418. Composition is skewed to basic and acidic residues over residues Ser-455–Lys-467 and Glu-478–Ser-491. Asn-559 carries N-linked (GlcNAc...) asparagine glycosylation. C-type lectin domains are found at residues Ala-562 to Cys-687 and Lys-716 to Val-828. Cysteines 653 and 678 form a disulfide. The N-linked (GlcNAc...) asparagine glycan is linked to Asn-765. A disulfide bridge links Cys-807 with Cys-819. Asn-831 and Asn-857 each carry an N-linked (GlcNAc...) asparagine glycan.

It is found in the secreted. In Caenorhabditis elegans, this protein is C-type lectin domain-containing protein 161 (clec-161).